A 344-amino-acid polypeptide reads, in one-letter code: DNA polymerase IV (344 aa).

The UmuC domain maps to 2 to 183 (IMLIDFDYFF…IKINDIPGIG (182 aa)). Residues D6 and D105 each coordinate Mg(2+). E106 is a catalytic residue.

The protein belongs to the DNA polymerase type-Y family. Monomer. Requires Mg(2+) as cofactor.

Its subcellular location is the cytoplasm. It catalyses the reaction DNA(n) + a 2'-deoxyribonucleoside 5'-triphosphate = DNA(n+1) + diphosphate. Functionally, poorly processive, error-prone DNA polymerase involved in untargeted mutagenesis. Copies undamaged DNA at stalled replication forks, which arise in vivo from mismatched or misaligned primer ends. These misaligned primers can be extended by PolIV. Exhibits no 3'-5' exonuclease (proofreading) activity. May be involved in translesional synthesis. This chain is DNA polymerase IV, found in Picrophilus torridus (strain ATCC 700027 / DSM 9790 / JCM 10055 / NBRC 100828 / KAW 2/3).